A 637-amino-acid chain; its full sequence is Choline O-acetyltransferase (637 aa).

Residues 1–13 (MPVSKREQSKDTG) are compositionally biased toward basic and acidic residues. The interval 1–20 (MPVSKREQSKDTGDPCALPK) is disordered. The active-site Proton acceptor is His329. CoA is bound by residues 407–419 (GKEF…MSPD), Ser445, and Gln545.

Belongs to the carnitine/choline acetyltransferase family.

It catalyses the reaction choline + acetyl-CoA = acetylcholine + CoA. In terms of biological role, catalyzes the reversible synthesis of acetylcholine (ACh) from acetyl CoA and choline at cholinergic synapses. This chain is Choline O-acetyltransferase (chat), found in Danio rerio (Zebrafish).